The sequence spans 458 residues: Argininosuccinate lyase (458 aa).

It belongs to the lyase 1 family. Argininosuccinate lyase subfamily.

It is found in the cytoplasm. The catalysed reaction is 2-(N(omega)-L-arginino)succinate = fumarate + L-arginine. It functions in the pathway amino-acid biosynthesis; L-arginine biosynthesis; L-arginine from L-ornithine and carbamoyl phosphate: step 3/3. This is Argininosuccinate lyase from Salmonella paratyphi B (strain ATCC BAA-1250 / SPB7).